We begin with the raw amino-acid sequence, 234 residues long: Phosphoribosylaminoimidazole-succinocarboxamide synthase (234 aa).

Belongs to the SAICAR synthetase family.

It carries out the reaction 5-amino-1-(5-phospho-D-ribosyl)imidazole-4-carboxylate + L-aspartate + ATP = (2S)-2-[5-amino-1-(5-phospho-beta-D-ribosyl)imidazole-4-carboxamido]succinate + ADP + phosphate + 2 H(+). It participates in purine metabolism; IMP biosynthesis via de novo pathway; 5-amino-1-(5-phospho-D-ribosyl)imidazole-4-carboxamide from 5-amino-1-(5-phospho-D-ribosyl)imidazole-4-carboxylate: step 1/2. The chain is Phosphoribosylaminoimidazole-succinocarboxamide synthase from Staphylococcus carnosus (strain TM300).